The sequence spans 561 residues: Oxygen-dependent choline dehydrogenase (561 aa).

6-35 (DYIIIGAGSAGNVLATRLTEDADVSVLLLE) lines the FAD pocket. His475 serves as the catalytic Proton acceptor.

It belongs to the GMC oxidoreductase family. It depends on FAD as a cofactor.

The enzyme catalyses choline + A = betaine aldehyde + AH2. It catalyses the reaction betaine aldehyde + NAD(+) + H2O = glycine betaine + NADH + 2 H(+). The protein operates within amine and polyamine biosynthesis; betaine biosynthesis via choline pathway; betaine aldehyde from choline (cytochrome c reductase route): step 1/1. Its function is as follows. Involved in the biosynthesis of the osmoprotectant glycine betaine. Catalyzes the oxidation of choline to betaine aldehyde and betaine aldehyde to glycine betaine at the same rate. This is Oxygen-dependent choline dehydrogenase from Pseudomonas aeruginosa (strain LESB58).